A 49-amino-acid chain; its full sequence is Large ribosomal subunit protein eL40 (49 aa).

This sequence belongs to the eukaryotic ribosomal protein eL40 family.

This chain is Large ribosomal subunit protein eL40, found in Methanosarcina acetivorans (strain ATCC 35395 / DSM 2834 / JCM 12185 / C2A).